The sequence spans 291 residues: GTPase Era (291 aa).

In terms of domain architecture, Era-type G spans 2-167 (KSGFVSIIGR…LDEIVKCLNE (166 aa)). The G1 stretch occupies residues 10 to 17 (GRTNAGKS). 10–17 (GRTNAGKS) lines the GTP pocket. The interval 36 to 40 (NATRR) is G2. The G3 stretch occupies residues 57 to 60 (DTPG). GTP contacts are provided by residues 57–61 (DTPGL) and 116–119 (NKVD). Residues 116-119 (NKVD) form a G4 region. Residues 146–148 (YSS) form a G5 region. The KH type-2 domain occupies 186 to 274 (YRDFILESIY…LLKLFVTVKK (89 aa)).

Belongs to the TRAFAC class TrmE-Era-EngA-EngB-Septin-like GTPase superfamily. Era GTPase family. In terms of assembly, monomer.

The protein resides in the cytoplasm. Its subcellular location is the cell inner membrane. Functionally, an essential GTPase that binds both GDP and GTP, with rapid nucleotide exchange. Plays a role in 16S rRNA processing and 30S ribosomal subunit biogenesis and possibly also in cell cycle regulation and energy metabolism. This chain is GTPase Era, found in Campylobacter jejuni subsp. doylei (strain ATCC BAA-1458 / RM4099 / 269.97).